The sequence spans 633 residues: Bifunctional enzyme CysN/CysC (633 aa).

A sulfate adenylyltransferase region spans residues 1–463 (MSHQSDLISE…REERAGRFGQ (463 aa)). The tr-type G domain occupies 22–241 (KELLRFLTCG…TVEIAADRNL (220 aa)). A G1 region spans residues 31–38 (GNVDDGKS). 31–38 (GNVDDGKS) is a GTP binding site. Residues 89 to 93 (GITID) are G2. The interval 110–113 (DTPG) is G3. GTP-binding positions include 110–114 (DTPGH) and 165–168 (NKMD). Residues 165–168 (NKMD) form a G4 region. The segment at 204–206 (SAL) is G5. The tract at residues 464–633 (QPATVLFSGL…LDLLRERQAI (170 aa)) is adenylyl-sulfate kinase. 472 to 479 (GLSGAGKS) contacts ATP.

This sequence in the C-terminal section; belongs to the APS kinase family. The protein in the N-terminal section; belongs to the TRAFAC class translation factor GTPase superfamily. Classic translation factor GTPase family. CysN/NodQ subfamily. Heterodimer composed of CysD, the smaller subunit, and CysNC.

It catalyses the reaction sulfate + ATP + H(+) = adenosine 5'-phosphosulfate + diphosphate. The catalysed reaction is adenosine 5'-phosphosulfate + ATP = 3'-phosphoadenylyl sulfate + ADP + H(+). It participates in sulfur metabolism; hydrogen sulfide biosynthesis; sulfite from sulfate: step 1/3. The protein operates within sulfur metabolism; hydrogen sulfide biosynthesis; sulfite from sulfate: step 2/3. Its function is as follows. With CysD forms the ATP sulfurylase (ATPS) that catalyzes the adenylation of sulfate producing adenosine 5'-phosphosulfate (APS) and diphosphate, the first enzymatic step in sulfur assimilation pathway. APS synthesis involves the formation of a high-energy phosphoric-sulfuric acid anhydride bond driven by GTP hydrolysis by CysN coupled to ATP hydrolysis by CysD. Functionally, APS kinase catalyzes the synthesis of activated sulfate. The sequence is that of Bifunctional enzyme CysN/CysC (cysNC) from Pseudomonas aeruginosa (strain ATCC 15692 / DSM 22644 / CIP 104116 / JCM 14847 / LMG 12228 / 1C / PRS 101 / PAO1).